Here is a 306-residue protein sequence, read N- to C-terminus: Brix domain-containing protein C4F8.04 (306 aa).

The tract at residues 16-49 (KALHQKNKDKLERRKERAKEEEKDPEKKRLRLSE) is disordered. Residues 21–42 (KNKDKLERRKERAKEEEKDPEK) are compositionally biased toward basic and acidic residues. The 190-residue stretch at 94–283 (PKLLVTTSKR…LRMVQKGVWD (190 aa)) folds into the Brix domain.

The polypeptide is Brix domain-containing protein C4F8.04 (Schizosaccharomyces pombe (strain 972 / ATCC 24843) (Fission yeast)).